A 391-amino-acid polypeptide reads, in one-letter code: MDIKRVTVIVLDGVGIGEAPDADEYGDVGSHSLANTAAAINGLDLPNMAALGLGCISEMQGVACPESFSGSYGKMQPLSKGKDTVSGHWEMMGIVLPTPFPVYPDGFPAAVIEPFKQKIGRGVLGNKSASGTDILEELGMEHIRTGDPIVYTSADSVFQIAAHEDVITPKELYAMCEIAREILVGEHAVGRVIARPFIGDSPETFKRTIRRHDYALTPETPTILDKVVAAGKQVYSVGKIDDIFGNRGISVSNHTVDNAASLEAVLEFLDVDFEGLLFANFIEFDMIYGHRNDPVGYANALKAVDQRLPELQAKLRAGDLVVITADHGVDPTTPGSNHSREYVPLLVFGPEVRSGVNLGTRQTLSDLAATIAEIFGLEQPLHGTSFLSELQ.

Mn(2+) is bound by residues Asp-12, Asp-285, His-290, Asp-326, His-327, and His-338.

It belongs to the phosphopentomutase family. Mn(2+) serves as cofactor.

The protein localises to the cytoplasm. It catalyses the reaction 2-deoxy-alpha-D-ribose 1-phosphate = 2-deoxy-D-ribose 5-phosphate. It carries out the reaction alpha-D-ribose 1-phosphate = D-ribose 5-phosphate. Its pathway is carbohydrate degradation; 2-deoxy-D-ribose 1-phosphate degradation; D-glyceraldehyde 3-phosphate and acetaldehyde from 2-deoxy-alpha-D-ribose 1-phosphate: step 1/2. In terms of biological role, isomerase that catalyzes the conversion of deoxy-ribose 1-phosphate (dRib-1-P) and ribose 1-phosphate (Rib-1-P) to deoxy-ribose 5-phosphate (dRib-5-P) and ribose 5-phosphate (Rib-5-P), respectively. The sequence is that of Phosphopentomutase from Herpetosiphon aurantiacus (strain ATCC 23779 / DSM 785 / 114-95).